A 61-amino-acid polypeptide reads, in one-letter code: Small ribosomal subunit protein uS14 (61 aa).

C24, C27, C40, and C43 together coordinate Zn(2+).

This sequence belongs to the universal ribosomal protein uS14 family. Zinc-binding uS14 subfamily. In terms of assembly, part of the 30S ribosomal subunit. Contacts proteins S3 and S10. Zn(2+) is required as a cofactor.

Functionally, binds 16S rRNA, required for the assembly of 30S particles and may also be responsible for determining the conformation of the 16S rRNA at the A site. This Oleidesulfovibrio alaskensis (strain ATCC BAA-1058 / DSM 17464 / G20) (Desulfovibrio alaskensis) protein is Small ribosomal subunit protein uS14.